We begin with the raw amino-acid sequence, 1456 residues long: Macrophage mannose receptor 1 (1456 aa).

The first 18 residues, 1–18, serve as a signal peptide directing secretion; that stretch reads MRLPLLLVFASVIPGAVL. Over 19-1389 the chain is Extracellular; it reads LLDTRQFLIY…DPSKPSSNVA (1371 aa). Positions 22 to 142 constitute a Ricin B-type lectin domain; that stretch reads TRQFLIYNED…SGLWSRWKIY (121 aa). 2 disulfides stabilise this stretch: cysteine 35–cysteine 49 and cysteine 74–cysteine 91. Asparagine 104 carries N-linked (GlcNAc...) asparagine glycosylation. The Fibronectin type-II domain occupies 163 to 211; sequence ANGATCAFPFKFENKWYADCTSAGRSDGWLWCGTTTDYDTDKLFGYCPL. Intrachain disulfides connect cysteine 168–cysteine 194, cysteine 182–cysteine 209, cysteine 247–cysteine 340, and cysteine 316–cysteine 332. One can recognise a C-type lectin 1 domain in the interval 225-341; that stretch reads LTSVSYQINS…CVQKLGYICK (117 aa). Asparagine 344 is a glycosylation site (N-linked (GlcNAc...) asparagine). C-type lectin domains follow at residues 369–487, 511–626, 655–778, and 807–923; these read YAGH…YICK, HHFY…FVCK, RTSL…WICQ, and YKDY…FICQ. Disulfide bonds link cysteine 391–cysteine 486 and cysteine 463–cysteine 478. Residue asparagine 529 is glycosylated (N-linked (GlcNAc...) asparagine). 7 cysteine pairs are disulfide-bonded: cysteine 532–cysteine 625, cysteine 600–cysteine 617, cysteine 646–cysteine 659, cysteine 680–cysteine 777, cysteine 753–cysteine 769, cysteine 828–cysteine 922, and cysteine 899–cysteine 914. Residues asparagine 926 and asparagine 930 are each glycosylated (N-linked (GlcNAc...) asparagine). C-type lectin domains lie at 952 to 1080, 1102 to 1213, and 1241 to 1356; these read YSNK…YICQ, YGKS…FLCK, and FHGH…YICK. Cystine bridges form between cysteine 977/cysteine 1079, cysteine 1052/cysteine 1071, cysteine 1123/cysteine 1212, cysteine 1190/cysteine 1204, cysteine 1263/cysteine 1355, and cysteine 1332/cysteine 1347. An N-linked (GlcNAc...) asparagine glycan is attached at asparagine 1160. An N-linked (GlcNAc...) asparagine glycan is attached at asparagine 1205. The helical transmembrane segment at 1390–1410 threads the bilayer; sequence GVVIIVILLILTGAGLAAYFF. The Cytoplasmic segment spans residues 1411–1456; the sequence is YKKRRVHLPQEGAFENTLYFNSQSSPGTSDMKDLVGNIEQNEHSVI.

(Microbial infection) Interacts with Dengue virus. In terms of assembly, (Microbial infection) May act as a receptor for hepatitis B virus, enabling uptake of the virus in hepatic dendritic cells.

It localises to the endosome membrane. The protein resides in the cell membrane. Mediates the endocytosis of glycoproteins by macrophages. Binds both sulfated and non-sulfated polysaccharide chains. Its function is as follows. (Microbial infection) Acts as a phagocytic receptor for bacteria, fungi and other pathogens. In terms of biological role, (Microbial infection) Acts as a receptor for Dengue virus envelope protein E. Functionally, (Microbial infection) Interacts with Hepatitis B virus envelope protein. The protein is Macrophage mannose receptor 1 (MRC1) of Homo sapiens (Human).